We begin with the raw amino-acid sequence, 152 residues long: Small ribosomal subunit protein uS8m (152 aa).

This sequence belongs to the universal ribosomal protein uS8 family.

The protein resides in the mitochondrion. In Marchantia polymorpha (Common liverwort), this protein is Small ribosomal subunit protein uS8m (RPS8).